Here is a 200-residue protein sequence, read N- to C-terminus: Recombination protein RecR (200 aa).

The segment at 57–72 (CSQCRDFTEEDTCNIC) adopts a C4-type zinc-finger fold. Positions 81–176 (GLLCVVEMPA…KVSRIAHGIP (96 aa)) constitute a Toprim domain.

This sequence belongs to the RecR family.

Functionally, may play a role in DNA repair. It seems to be involved in an RecBC-independent recombinational process of DNA repair. It may act with RecF and RecO. The protein is Recombination protein RecR of Haemophilus influenzae (strain 86-028NP).